The chain runs to 513 residues: Coiled-coil domain-containing protein 102B (513 aa).

The segment at 1 to 217 is required for centriolar localization and for interaction with CEP250, CROCC, LRRC45 and NEK2; the sequence is MNLDSIHRLI…IDSLKLSEEM (217 aa). Phosphoserine is present on residues Ser-21, Ser-22, Ser-34, Ser-135, Ser-142, Ser-194, and Ser-210. A coiled-coil region spans residues 72–142; it reads ELRLRELEEV…ELSTLKKKQS (71 aa). Coiled-coil stretches lie at residues 268–337 and 363–513; these read QKIL…ESKS and WDKR…LQNW. 3 positions are modified to phosphoserine: Ser-401, Ser-404, and Ser-406. The interval 493-513 is disordered; it reads LDEEKERNENLETELRHLQNW.

Interacts (via N-terminus) with centriolar protein CEP250/CNAP1; the interaction results in recruitment of CCDC102B to the proximal ends of centrioles. Interacts (via N-terminus) with CROCC/rootletin and LRRC45. Interacts (via N-terminus) with serine/threonine-protein kinase NEK2; the interaction results in phosphorylation of CCDC102B. Phosphorylated directly or indirectly by NEK2 during mitosis which causes dissociation of CCDC102B from the centrosome and allows for centrosome separation.

Its subcellular location is the cytoplasm. The protein localises to the cytoskeleton. It localises to the microtubule organizing center. It is found in the centrosome. The protein resides in the centriole. Its function is as follows. During interphase, forms fibers at the proximal ends of centrioles to maintain centrosome cohesion. During mitosis, dissociates from the centrosome following phosphorylation to allow centrosome separation. Contributes to CROCC/rootletin filament formation. The protein is Coiled-coil domain-containing protein 102B (CCDC102B) of Homo sapiens (Human).